The following is a 140-amino-acid chain: CBS domain-containing protein YhcV (140 aa).

CBS domains are found at residues 8-64 and 72-127; these read MTTQ…GRDG and MSTE…NESA.

The sequence is that of CBS domain-containing protein YhcV (yhcV) from Bacillus subtilis (strain 168).